We begin with the raw amino-acid sequence, 311 residues long: Probable dihydroorotate dehydrogenase A (fumarate) (311 aa).

Residues Lys-45, Asn-69–Leu-73, and Asn-128 each bind substrate. Lys-45–Thr-46 provides a ligand contact to FMN. Position 128 (Asn-128) interacts with FMN. Residue Cys-131 is the Nucleophile of the active site. Positions 165 and 193 each coordinate FMN. A substrate-binding site is contributed by Asn-194 to Ser-195. FMN contacts are provided by residues Gly-220, Gly-248–Gly-249, and Gly-270–Thr-271.

This sequence belongs to the dihydroorotate dehydrogenase family. Type 1 subfamily. As to quaternary structure, homodimer. FMN is required as a cofactor.

The protein resides in the cytoplasm. The enzyme catalyses (S)-dihydroorotate + fumarate = orotate + succinate. Its pathway is pyrimidine metabolism; UMP biosynthesis via de novo pathway. Functionally, catalyzes the conversion of dihydroorotate to orotate with fumarate as the electron acceptor. This is Probable dihydroorotate dehydrogenase A (fumarate) (pyrDA) from Streptococcus pneumoniae serotype 4 (strain ATCC BAA-334 / TIGR4).